A 230-amino-acid chain; its full sequence is MTKHQFKLSDPRLLSRIGYQFKQPELLQLALTHRSVSHKYNYERLEFLGDSLLGMIIANYLYHAYPHENEGRLTRMRATLVRQEALGKIATDLQLSRCLILSTGELKSGGHHRESILADTVEAIIGAIYLDSSDLNLLKDIVLKWYTPYLDHIEPTDQLKDPKSRLQEYLQARKKPLPVYEVVDIQGDAPHQHFKVECLVDGLSKIHGEGSSRRFAEQAAAAEILKLLEQ.

Residues 10–133 (DPRLLSRIGY…IIGAIYLDSS (124 aa)) enclose the RNase III domain. Glu-46 is a Mg(2+) binding site. Asp-50 is a catalytic residue. Mg(2+)-binding residues include Asp-119 and Glu-122. Glu-122 is an active-site residue. Residues 161–230 (DPKSRLQEYL…AAEILKLLEQ (70 aa)) form the DRBM domain.

It belongs to the ribonuclease III family. Homodimer. Mg(2+) is required as a cofactor.

Its subcellular location is the cytoplasm. The catalysed reaction is Endonucleolytic cleavage to 5'-phosphomonoester.. In terms of biological role, digests double-stranded RNA. Involved in the processing of primary rRNA transcript to yield the immediate precursors to the large and small rRNAs (23S and 16S). Processes some mRNAs, and tRNAs when they are encoded in the rRNA operon. Processes pre-crRNA and tracrRNA of type II CRISPR loci if present in the organism. The chain is Ribonuclease 3 (rnc) from Acinetobacter baumannii (strain AB307-0294).